Reading from the N-terminus, the 287-residue chain is Inorganic pyrophosphatase (287 aa).

Arg-79 is a binding site for diphosphate. Asp-116, Asp-121, and Asp-153 together coordinate Mg(2+). Residues 244-258 are compositionally biased toward polar residues; it reads NSTLGNSDSVDSSKL. The tract at residues 244–269 is disordered; that stretch reads NSTLGNSDSVDSSKLASIPRGENLPP.

It belongs to the PPase family. Mg(2+) serves as cofactor.

It is found in the cytoplasm. It carries out the reaction diphosphate + H2O = 2 phosphate + H(+). In terms of biological role, involved in osmoadaptation. In Emericella nidulans (strain FGSC A4 / ATCC 38163 / CBS 112.46 / NRRL 194 / M139) (Aspergillus nidulans), this protein is Inorganic pyrophosphatase (ipp1).